Reading from the N-terminus, the 200-residue chain is MKIAILIRHGESDINVKGILSDTIDNNMLTEKGMRQAEHAAAELKGIDIKNFYSSPIKRAFDTAQIIADSFNKDVVTDQRLIEIGLGKARGRKANEFTNGLYSGHITGKIREDLEMEKWDSLQKRVVEAIASREGINVYVTHSDPIRAAISYFLEMGEEETYGLSIKNASMTVIDVEIGRILTLGAISMTDSVRKYLNIQ.

His-9 serves as the catalytic Tele-phosphohistidine intermediate. His-142 is a catalytic residue.

Belongs to the phosphoglycerate mutase family. Homodimer.

The catalysed reaction is (2R)-2-phosphoglycerate = (2R)-3-phosphoglycerate. The protein operates within carbohydrate degradation; glycolysis; pyruvate from D-glyceraldehyde 3-phosphate: step 3/5. In terms of biological role, catalyzes the interconversion of 2-phosphoglycerate and 3-phosphoglycerate. The chain is 2,3-bisphosphoglycerate-dependent phosphoglycerate mutase from Thermoplasma acidophilum (strain ATCC 25905 / DSM 1728 / JCM 9062 / NBRC 15155 / AMRC-C165).